The primary structure comprises 866 residues: Protein SEY1 (866 aa).

Residues 1–746 (MVSNGHFAYA…KRSAIGGMTQ (746 aa)) are Cytoplasmic-facing. The 258-residue stretch at 48–305 (GFNYHLISVF…IPADGFAVYA (258 aa)) folds into the GB1/RHD3-type G domain. 58–65 (GSQSTGKS) contacts GTP. Positions 480 to 506 (SNYTQELALYQKDLEKISAQLRKDEMR) form a coiled coil. The chain crosses the membrane as a helical span at residues 747 to 767 (IPVYFYILLLALGWNEIIAVL). Residues 768 to 770 (RNP) are Lumenal-facing. Residues 771–791 (VYFFMLFLCSVAAYIIYQLNL) form a helical membrane-spanning segment. Over 792–866 (WGPMVKMAEA…DDEVEGEETW (75 aa)) the chain is Cytoplasmic. Residues 840-866 (SHVRSGRNATKINERDDDDEVEGEETW) are disordered. Residues 854–866 (RDDDDEVEGEETW) are compositionally biased toward acidic residues.

Belongs to the TRAFAC class dynamin-like GTPase superfamily. GB1/RHD3 GTPase family. RHD3 subfamily.

It is found in the endoplasmic reticulum membrane. Its function is as follows. Cooperates with the reticulon proteins and tubule-shaping DP1 family proteins to generate and maintain the structure of the tubular endoplasmic reticulum network. Has GTPase activity, which is required for its function in ER organization. This chain is Protein SEY1, found in Coccidioides immitis (strain RS) (Valley fever fungus).